The primary structure comprises 148 residues: Putative pre-16S rRNA nuclease (148 aa).

This sequence belongs to the YqgF nuclease family.

It is found in the cytoplasm. Could be a nuclease involved in processing of the 5'-end of pre-16S rRNA. In Colwellia psychrerythraea (strain 34H / ATCC BAA-681) (Vibrio psychroerythus), this protein is Putative pre-16S rRNA nuclease.